The chain runs to 587 residues: Pyruvate decarboxylase 3 (587 aa).

The substrate site is built by Asp-48 and His-135. The segment at 415 to 496 is thiamine pyrophosphate binding; that stretch reads DSWFNCQKLR…FLINNGGYTI (82 aa). Residues Asp-464, Asn-491, and Gly-493 each contribute to the Mg(2+) site. Glu-497 is a binding site for substrate.

It belongs to the TPP enzyme family. In terms of assembly, homotetramer. The cofactor is a metal cation. Requires thiamine diphosphate as cofactor.

The enzyme catalyses a 2-oxocarboxylate + H(+) = an aldehyde + CO2. The sequence is that of Pyruvate decarboxylase 3 (PDC3) from Oryza sativa subsp. indica (Rice).